Reading from the N-terminus, the 249-residue chain is Secreted flagellin C (249 aa).

In terms of assembly, interacts with FliS.

The protein resides in the secreted. Functionally, might play a role in virulence. The chain is Secreted flagellin C (flaC) from Campylobacter jejuni subsp. jejuni serotype O:6 (strain 81116 / NCTC 11828).